The sequence spans 199 residues: Potassium-transporting ATPase KdpC subunit (199 aa).

The chain crosses the membrane as a helical span at residues 7 to 27 (PALVMTAALCLITGIIYPGLI).

It belongs to the KdpC family. As to quaternary structure, the system is composed of three essential subunits: KdpA, KdpB and KdpC.

The protein localises to the cell inner membrane. Part of the high-affinity ATP-driven potassium transport (or Kdp) system, which catalyzes the hydrolysis of ATP coupled with the electrogenic transport of potassium into the cytoplasm. This subunit acts as a catalytic chaperone that increases the ATP-binding affinity of the ATP-hydrolyzing subunit KdpB by the formation of a transient KdpB/KdpC/ATP ternary complex. This Gemmatimonas aurantiaca (strain DSM 14586 / JCM 11422 / NBRC 100505 / T-27) protein is Potassium-transporting ATPase KdpC subunit.